The following is a 71-amino-acid chain: UPF0499 protein ACLA_083080 (71 aa).

Residues 1 to 18 (MKFLNILTLAFITGMASA) form the signal peptide. Disulfide bonds link Cys44-Cys58, Cys48-Cys61, and Cys54-Cys68.

The protein belongs to the UPF0499 family.

It localises to the secreted. The chain is UPF0499 protein ACLA_083080 from Aspergillus clavatus (strain ATCC 1007 / CBS 513.65 / DSM 816 / NCTC 3887 / NRRL 1 / QM 1276 / 107).